The sequence spans 333 residues: MSGKAERLKDEGSRLQVTAAGATAGLISRFVIAPLDVVKIRLQLQHHSLSDPLLHQRRAEIIGGGPVYKGTLPTIRHILRTEGLTGLWKGNIPAELLYVSYAAVQFTTYRSITQFLQAAFPKDQNKQLPPSVESFIAGASAGGVATAVTYPLDLLRTRFAAQGVERVYPSLVQALKTIYASEGVTGYFRGLGPGLAQIIPYMGTFFCVYETLRPRLSKLELPYSSGSAVAGVLASVMAKTGTFPLDLVRKRIQVQGPTRGMYVHKNIPVYDGGMVKTVATIVRREGVRGLYRGLTVSLFKAAPASAVTMWTYERALKLYIRLGAAGPGRKEGV.

Solcar repeat units follow at residues 12-115 (GSRL…ITQF), 129-215 (PPSV…LRPR), and 222-318 (PYSS…ALKL). 6 helical membrane passes run 17–35 (VTAA…IAPL), 96–112 (LLYV…YRSI), 135–155 (FIAG…LDLL), 190–209 (GLGP…FCVY), 221–238 (LPYS…SVMA), and 293–310 (GLTV…VTMW).

It belongs to the mitochondrial carrier (TC 2.A.29) family.

The protein localises to the mitochondrion inner membrane. Its function is as follows. Mitochondrial transporter that mediates uptake of thiamine pyrophosphate (ThPP) into mitochondria. This chain is Mitochondrial thiamine pyrophosphate carrier 1 (tpc-1), found in Neurospora crassa (strain ATCC 24698 / 74-OR23-1A / CBS 708.71 / DSM 1257 / FGSC 987).